The primary structure comprises 213 residues: Small ribosomal subunit protein eS6 (213 aa).

The protein belongs to the eukaryotic ribosomal protein eS6 family.

The protein is Small ribosomal subunit protein eS6 of Sulfolobus acidocaldarius (strain ATCC 33909 / DSM 639 / JCM 8929 / NBRC 15157 / NCIMB 11770).